A 134-amino-acid chain; its full sequence is Small ribosomal subunit protein uS9 (134 aa).

The tract at residues 114–134 is disordered; sequence EVERKKYGLKKARRAPQFSKR. Over residues 120–134 the composition is skewed to basic residues; it reads YGLKKARRAPQFSKR.

It belongs to the universal ribosomal protein uS9 family.

The chain is Small ribosomal subunit protein uS9 from Thermotoga sp. (strain RQ2).